The chain runs to 369 residues: Methionine import ATP-binding protein MetN 1 (369 aa).

Residues 1–26 (MTTMTVPPSLLPLEPFPTAPDTRAST) are disordered. One can recognise an ABC transporter domain in the interval 29-265 (IRLHGLGKRY…PRHAVTRSLL (237 aa)). 62 to 69 (GRSGAGKS) is an ATP binding site.

It belongs to the ABC transporter superfamily. Methionine importer (TC 3.A.1.24) family. In terms of assembly, the complex is composed of two ATP-binding proteins (MetN), two transmembrane proteins (MetI) and a solute-binding protein (MetQ).

The protein localises to the cell inner membrane. The catalysed reaction is L-methionine(out) + ATP + H2O = L-methionine(in) + ADP + phosphate + H(+). It catalyses the reaction D-methionine(out) + ATP + H2O = D-methionine(in) + ADP + phosphate + H(+). Part of the ABC transporter complex MetNIQ involved in methionine import. Responsible for energy coupling to the transport system. This chain is Methionine import ATP-binding protein MetN 1, found in Pseudomonas aeruginosa (strain UCBPP-PA14).